The chain runs to 735 residues: Exocyst complex component 7 (735 aa).

2 coiled-coil regions span residues 5–42 (QEAS…TKNM) and 63–85 (VHKQ…SCLD). The residue at position 133 (Ser-133) is a Phosphoserine. Residues 239–268 (HKSSSSSGVPYSPAIPNKRKDTPTKKPVKR) are disordered.

Belongs to the EXO70 family. In terms of assembly, the exocyst complex is composed of EXOC1, EXOC2, EXOC3, EXOC4, EXOC5, EXOC6, EXOC7 and EXOC8. Interacts with ARHQ in a GTP-dependent manner. Interacts with RAB11FIP3. In terms of tissue distribution, abundant in the ventricular zone, the outer subventricular zone and the cortical plate of the fetal cortex.

The protein localises to the cytoplasm. Its subcellular location is the cytosol. It is found in the cell membrane. It localises to the midbody. The protein resides in the midbody ring. Functionally, component of the exocyst complex involved in the docking of exocytic vesicles with fusion sites on the plasma membrane. In adipocytes, plays a crucial role in targeting SLC2A4 vesicle to the plasma membrane in response to insulin, perhaps directing the vesicle to the precise site of fusion. It is required for neuron survival and plays an essential role in cortical development. The protein is Exocyst complex component 7 (EXOC7) of Homo sapiens (Human).